Consider the following 1170-residue polypeptide: WD repeat-containing protein 35 (1170 aa).

5 WD repeats span residues 12–51 (PNNV…DDSK), 69–108 (GHSG…WYEE), 113–152 (RNKS…IWGK), 154–193 (LKGI…IMKM), and 491–528 (GTRD…LIQK).

Component of the IFT complex A (IFT-A) complex. IFT-A complex is divided into a core subcomplex composed of IFT122:IFT140:WDR19 which is associated with TULP3 and a peripheral subcomplex composed of IFT43:WDR35:TTC21B. Interacts directy with IFT122, ITF43 and TTC21B. Interacts with IFT43. Interacts with CFAP61. As to expression, expressed at high levels in testis and at lower levels in the brain (at protein level). Also present in other tissues, including heart, uterus, spinal cord, ovary, liver, kidney, lung, pancreas and stomach.

Its subcellular location is the cytoplasm. It is found in the cytoskeleton. The protein resides in the microtubule organizing center. The protein localises to the centrosome. It localises to the cilium axoneme. Its subcellular location is the cilium basal body. Its function is as follows. As a component of the IFT complex A (IFT-A), a complex required for retrograde ciliary transport and entry into cilia of G protein-coupled receptors (GPCRs), it is involved in ciliogenesis and ciliary protein trafficking. May promote CASP3 activation and TNF-stimulated apoptosis. This chain is WD repeat-containing protein 35 (Wdr35), found in Rattus norvegicus (Rat).